The primary structure comprises 2092 residues: RNA-directed RNA polymerase L (2092 aa).

An endonuclease region spans residues 18 to 215 (VPIKHFDCTM…ELSSTDEELG (198 aa)). Positions 79, 111, and 125 each coordinate Mn(2+). The active-site For endonuclease activity is K143. One can recognise a RdRp catalytic domain in the interval 975–1166 (ARKQCKGPVW…AICFRMKKEL (192 aa)). Residue D1134 participates in Mg(2+) binding. Residues 1706 to 1822 (GAGTVGGFIK…PFGCPVYIIK (117 aa)) form a cap-binding region.

It belongs to the Bunyavirales RNA polymerase family. As to quaternary structure, homomultimer. Interacts with glycoprotein N; this interaction allows efficient polymerase packaging into virus particles. Interacts with nucleoprotein N. Mn(2+) serves as cofactor. The cofactor is Mg(2+).

The protein localises to the host Golgi apparatus. Its subcellular location is the host endoplasmic reticulum. It is found in the host endoplasmic reticulum-Golgi intermediate compartment. It localises to the virion. It catalyses the reaction RNA(n) + a ribonucleoside 5'-triphosphate = RNA(n+1) + diphosphate. Its function is as follows. RNA-dependent RNA polymerase, which is responsible for the replication and transcription of the viral RNA genome using antigenomic RNA as an intermediate. During transcription, synthesizes subgenomic RNAs and assures their capping by a cap-snatching mechanism, which involves the endonuclease activity cleaving the host capped pre-mRNAs. These short capped RNAs are then used as primers for viral transcription. The 3'-end of subgenomic mRNAs molecules are not polyadenylated. During replication, the polymerase binds the 5' and 3' vRNA extremities at distinct sites. In turn, significant conformational changes occur in the polymerase and in vRNA to initiate active RNA synthesis. As a consequence of the use of the same enzyme for both transcription and replication, these mechanisms need to be well coordinated. The sequence is that of RNA-directed RNA polymerase L from Aedes (Bovine).